The following is a 224-amino-acid chain: MTDARQRLRLMQLASSSLPVGSFTWSQGLEWAVEIGWVKNAEDFAHWQTQQLEQNFFTVDLPIFARLYHACERNDVTAARRWSAYLLACRETRELREEERSRGAAFTRLVVDWVPDCPQTWRPLFANSQLCGMAWLGVRWRIPLTDLALSLGYSWLESAVMAGVKLVPFGQQAAQQLILSLCDHYAQGMAQALARPDADLGSSTPLAAIASARHETQYCRLFRS.

Belongs to the UreF family. In terms of assembly, ureD, UreF and UreG form a complex that acts as a GTP-hydrolysis-dependent molecular chaperone, activating the urease apoprotein by helping to assemble the nickel containing metallocenter of UreC. The UreE protein probably delivers the nickel.

The protein resides in the cytoplasm. Functionally, required for maturation of urease via the functional incorporation of the urease nickel metallocenter. The polypeptide is Urease accessory protein UreF (Citrobacter koseri (strain ATCC BAA-895 / CDC 4225-83 / SGSC4696)).